A 118-amino-acid polypeptide reads, in one-letter code: RNA guanine-N7 methyltransferase activating subunit (118 aa).

Threonine 2 carries the N-acetylthreonine modification. The segment at 2–55 (TDTAEAVPNFEEMFASRFTENDKEYQEYLKRPPESPPIVEEWNSRAGGNQRNRG) is interaction with RNMT. The tract at residues 30 to 118 (LKRPPESPPI…YNQRPPYGYY (89 aa)) is disordered. A Phosphoserine modification is found at serine 36. The RNMT-activating domain signature appears at 36 to 42 (SPPIVEE). Positions 45-56 (SRAGGNQRNRGN) are enriched in low complexity. The tract at residues 56–118 (NRLQDNRQFR…YNQRPPYGYY (63 aa)) is RNA-binding. The span at 57–70 (RLQDNRQFRGRDNR) shows a compositional bias: basic and acidic residues. Over residues 76–93 (DNRSNQWHGRSWGNNYPQ) the composition is skewed to polar residues. Arginine 85 is subject to Omega-N-methylarginine. The residue at position 86 (serine 86) is a Phosphoserine. Positions 98–109 (PYYPQQYGHYGY) are enriched in low complexity.

Belongs to the RAM family. As to quaternary structure, interacts with RNMT; this interaction enhances mRNA binding and cap methyltransferase activity.

It is found in the nucleus. In terms of biological role, regulatory subunit of the mRNA-capping methyltransferase RNMT:RAMAC complex that methylates the N7 position of the added guanosine to the 5'-cap structure of mRNAs. Promotes the recruitment of the methyl donor, S-adenosyl-L-methionine, to RNMT. Regulates RNMT expression by a post-transcriptional stabilizing mechanism. Binds RNA. The polypeptide is RNA guanine-N7 methyltransferase activating subunit (RAMAC) (Pongo abelii (Sumatran orangutan)).